Here is a 763-residue protein sequence, read N- to C-terminus: Phosphoglycerol transferase I (763 aa).

4 helical membrane passes run 1-21 (MSELLSFALFLASVLIYAWKA), 26-46 (WWFAATLTVLGLFVVLNITLF), 77-97 (ILPGIGIVLGLTAVFGALGWI), and 108-128 (FGYSLLALLLALGSVDASPAF).

The protein belongs to the OpgB family.

It localises to the cell inner membrane. The enzyme catalyses a phosphatidylglycerol + a membrane-derived-oligosaccharide D-glucose = a 1,2-diacyl-sn-glycerol + a membrane-derived-oligosaccharide 6-(glycerophospho)-D-glucose.. Its pathway is glycan metabolism; osmoregulated periplasmic glucan (OPG) biosynthesis. Its function is as follows. Transfers a phosphoglycerol residue from phosphatidylglycerol to the membrane-bound nascent glucan backbones. This is Phosphoglycerol transferase I from Shigella boydii serotype 18 (strain CDC 3083-94 / BS512).